The primary structure comprises 57 residues: Preprotein translocase subunit SecG (57 aa).

The Cytoplasmic segment spans residues 1–33 (MARRRRYEGLNPFVAAGLIKFSEEGELERIKLT). The chain crosses the membrane as a helical span at residues 34–55 (PKSAVVISVALIAAILVLNLIH). Residues 56–57 (PL) lie on the Extracellular side of the membrane.

This sequence belongs to the SEC61-beta family. Component of the protein translocase complex. Heterotrimer consisting of alpha (SecY), beta (SecG) and gamma (SecE) subunits. Can form oligomers of the heterotrimer.

The protein localises to the cell membrane. Its function is as follows. Involved in protein export. The function of the beta subunit is unknown, but it may be involved in stabilization of the trimeric complex. This Pyrobaculum neutrophilum (strain DSM 2338 / JCM 9278 / NBRC 100436 / V24Sta) (Thermoproteus neutrophilus) protein is Preprotein translocase subunit SecG.